Consider the following 360-residue polypeptide: Peptide chain release factor 1 (360 aa).

Gln235 carries the post-translational modification N5-methylglutamine. Over residues 283-308 (MQKRQQAEASERRNLLGSGDRSDRNR) the composition is skewed to basic and acidic residues. The segment at 283 to 313 (MQKRQQAEASERRNLLGSGDRSDRNRTYNFP) is disordered.

This sequence belongs to the prokaryotic/mitochondrial release factor family. Post-translationally, methylated by PrmC. Methylation increases the termination efficiency of RF1.

The protein resides in the cytoplasm. Functionally, peptide chain release factor 1 directs the termination of translation in response to the peptide chain termination codons UAG and UAA. This chain is Peptide chain release factor 1, found in Yersinia enterocolitica serotype O:8 / biotype 1B (strain NCTC 13174 / 8081).